The chain runs to 342 residues: S-adenosylmethionine:tRNA ribosyltransferase-isomerase (342 aa).

The protein belongs to the QueA family. In terms of assembly, monomer.

The protein resides in the cytoplasm. The catalysed reaction is 7-aminomethyl-7-carbaguanosine(34) in tRNA + S-adenosyl-L-methionine = epoxyqueuosine(34) in tRNA + adenine + L-methionine + 2 H(+). It functions in the pathway tRNA modification; tRNA-queuosine biosynthesis. Transfers and isomerizes the ribose moiety from AdoMet to the 7-aminomethyl group of 7-deazaguanine (preQ1-tRNA) to give epoxyqueuosine (oQ-tRNA). In Sulfurimonas denitrificans (strain ATCC 33889 / DSM 1251) (Thiomicrospira denitrificans (strain ATCC 33889 / DSM 1251)), this protein is S-adenosylmethionine:tRNA ribosyltransferase-isomerase.